The sequence spans 202 residues: Small ribosomal subunit protein uS4 (202 aa).

The S4 RNA-binding domain maps to 91-154; it reads SMLSSVLYNS…VNLPSVLAAI (64 aa).

It belongs to the universal ribosomal protein uS4 family. In terms of assembly, part of the 30S ribosomal subunit. Contacts protein S5. The interaction surface between S4 and S5 is involved in control of translational fidelity.

In terms of biological role, one of the primary rRNA binding proteins, it binds directly to 16S rRNA where it nucleates assembly of the body of the 30S subunit. Its function is as follows. With S5 and S12 plays an important role in translational accuracy. This Ehrlichia ruminantium (strain Gardel) protein is Small ribosomal subunit protein uS4.